The following is a 32-amino-acid chain: Trypsin inhibitor 3 (32 aa).

Intrachain disulfides connect C6-C23, C13-C25, and C19-C31.

It belongs to the protease inhibitor I7 (squash-type serine protease inhibitor) family.

It is found in the secreted. Inhibits trypsin. The chain is Trypsin inhibitor 3 from Cucurbita pepo (Vegetable marrow).